A 647-amino-acid polypeptide reads, in one-letter code: XK-related protein 4 (647 aa).

Residues M1 to S15 show a composition bias toward basic and acidic residues. The interval M1 to A44 is disordered. The span at P21–V31 shows a compositional bias: polar residues. Transmembrane regions (helical) follow at residues W112–V132 and W142–F162. S197 is modified (phosphoserine). Residues S197 to G238 form a disordered region. The segment covering S207–T236 has biased composition (polar residues). The next 8 membrane-spanning stretches (helical) occupy residues C245 to W265, H303 to V323, L328 to A348, K362 to A382, V393 to H415, W425 to V445, L454 to L474, and F484 to L504.

Belongs to the XK family. Homodimer; homodimerization takes place upon caspase cleavage. Interacts with the processed C-terminus of XRCC4 (protein XRCC4, C-terminus); interaction promotes the phospholipid scramblase activity. Post-translationally, undergoes proteolytic processing by caspase-3 (CASP3), caspase-6 (CASP6) and caspase-7 (CASP7) to generate the XK-related protein 4, processed form, leading to its activation. In terms of tissue distribution, highly expressed in expressed in the brain; weakly expressed in the spleen, thymus, uterus, blood vessels and fetus.

The protein resides in the cell membrane. The enzyme catalyses a 1,2-diacyl-sn-glycero-3-phospho-L-serine(in) = a 1,2-diacyl-sn-glycero-3-phospho-L-serine(out). Its activity is regulated as follows. Phospholipid scramblase activity is activated upon caspase cleavage to generate the XK-related protein 4, processed form. Does not act prior the onset of apoptosis. Homodimerizes upon caspase cleavage. Phospholipid scramblase activity is activated following interaction with the processed C-terminus of XRCC4 (protein XRCC4, C-terminus). Functionally, phospholipid scramblase that promotes phosphatidylserine exposure on apoptotic cell surface. Phosphatidylserine is a specific marker only present at the surface of apoptotic cells and acts as a specific signal for engulfment. This Mus musculus (Mouse) protein is XK-related protein 4.